The sequence spans 238 residues: Tyrosine recombinase XerD-like (238 aa).

The Core-binding (CB) domain maps to 1 to 75 (MKLPNEIDEY…SANQYLLFLY (75 aa)). The Tyr recombinase domain maps to 90 to 238 (VQKKSQTAQS…TITTLEKYYR (149 aa)). Residues lysine 154 and arginine 204 contribute to the active site. The active-site O-(3'-phospho-DNA)-tyrosine intermediate is the tyrosine 236.

The protein belongs to the 'phage' integrase family. XerD-like subfamily.

It is found in the cytoplasm. Its function is as follows. Putative tyrosine recombinase. Not involved in the cutting and rejoining of the recombining DNA molecules on dif(SL) site. This chain is Tyrosine recombinase XerD-like (ynbA), found in Lactococcus lactis subsp. lactis (strain IL1403) (Streptococcus lactis).